The sequence spans 282 residues: NADPH-dependent 7-cyano-7-deazaguanine reductase (282 aa).

Residue 88–90 participates in substrate binding; that stretch reads IES. 90-91 provides a ligand contact to NADPH; that stretch reads SK. C190 acts as the Thioimide intermediate in catalysis. D197 functions as the Proton donor in the catalytic mechanism. Residue 229 to 230 coordinates substrate; it reads HE. An NADPH-binding site is contributed by 258–259; the sequence is RG.

It belongs to the GTP cyclohydrolase I family. QueF type 2 subfamily. Homodimer.

It is found in the cytoplasm. It carries out the reaction 7-aminomethyl-7-carbaguanine + 2 NADP(+) = 7-cyano-7-deazaguanine + 2 NADPH + 3 H(+). It functions in the pathway tRNA modification; tRNA-queuosine biosynthesis. In terms of biological role, catalyzes the NADPH-dependent reduction of 7-cyano-7-deazaguanine (preQ0) to 7-aminomethyl-7-deazaguanine (preQ1). This Shigella flexneri serotype 5b (strain 8401) protein is NADPH-dependent 7-cyano-7-deazaguanine reductase.